The following is a 27-amino-acid chain: Protamine-B (27 aa).

A disordered region spans residues 1-27; the sequence is ARRRRRSSRPQRRRRRRRHGRRRRGRR.

As to expression, testis.

It is found in the nucleus. The protein resides in the chromosome. Its function is as follows. Protamines substitute for histones in the chromatin of sperm during the haploid phase of spermatogenesis. They compact sperm DNA into a highly condensed, stable and inactive complex. The polypeptide is Protamine-B (Acipenser stellatus (Sevruga)).